The chain runs to 349 residues: Aspartate carbamoyltransferase catalytic subunit (349 aa).

Carbamoyl phosphate is bound by residues Arg-59 and Thr-60. Lys-87 contributes to the L-aspartate binding site. Positions 109, 142, and 145 each coordinate carbamoyl phosphate. Residues Arg-182 and Arg-253 each contribute to the L-aspartate site. Gly-294 and Pro-295 together coordinate carbamoyl phosphate.

It belongs to the aspartate/ornithine carbamoyltransferase superfamily. ATCase family. As to quaternary structure, heterododecamer (2C3:3R2) of six catalytic PyrB chains organized as two trimers (C3), and six regulatory PyrI chains organized as three dimers (R2).

The enzyme catalyses carbamoyl phosphate + L-aspartate = N-carbamoyl-L-aspartate + phosphate + H(+). It functions in the pathway pyrimidine metabolism; UMP biosynthesis via de novo pathway; (S)-dihydroorotate from bicarbonate: step 2/3. In terms of biological role, catalyzes the condensation of carbamoyl phosphate and aspartate to form carbamoyl aspartate and inorganic phosphate, the committed step in the de novo pyrimidine nucleotide biosynthesis pathway. The polypeptide is Aspartate carbamoyltransferase catalytic subunit (Synechococcus sp. (strain CC9311)).